An 81-amino-acid chain; its full sequence is Large ribosomal subunit protein bL27 (81 aa).

A compositionally biased stretch (polar residues) spans 1–11 (MATSKSGGSSK). Positions 1-24 (MATSKSGGSSKNGRDSISKRLGVK) are disordered.

Belongs to the bacterial ribosomal protein bL27 family.

In Borrelia duttonii (strain Ly), this protein is Large ribosomal subunit protein bL27.